We begin with the raw amino-acid sequence, 871 residues long: Zinc finger protein 473 (871 aa).

The KRAB domain occupies 6-75 (VTLKDVGMDF…AGGSPEATSP (70 aa)). Disordered stretches follow at residues 47–81 (PPRPNLTSHPDGSEDLEPLAGGSPEATSPDVTETK) and 140–164 (NGESPTECKSHELKRGLSPVSTVST). Over residues 71–81 (EATSPDVTETK) the composition is skewed to polar residues. Residues 145-154 (TECKSHELKR) are compositionally biased toward basic and acidic residues. K148 is covalently cross-linked (Glycyl lysine isopeptide (Lys-Gly) (interchain with G-Cter in SUMO2)). A C2H2-type 1 zinc finger spans residues 209-231 (YQCSECGKSFSGSYRLTQHWITH). The C2H2-type 2; degenerate zinc finger occupies 265 to 286 (YVCNEYGTTFSQSTYLWHQKTH). Basic and acidic residues predominate over residues 290 to 317 (KPCKSQDSDHPPSHDTQPGEHQKTHTDS). The segment at 290–318 (KPCKSQDSDHPPSHDTQPGEHQKTHTDSK) is disordered. Residues 312-552 (KTHTDSKSYN…GFFVSGKILD (241 aa)) form an interaction with SLBP/pre-mRNA complex region. 3 consecutive C2H2-type zinc fingers follow at residues 320 to 342 (YNCNECGKAFTRIFHLTRHQKIH), 347 to 369 (YECSKCQATFNLRKHLIQHQKTH), and 375 to 397 (SECQECGKIFRHSSLLIEHQALH). The segment at 403-425 (YKCNERGKSFRHNSTLKIHQRVH) adopts a C2H2-type 6; degenerate zinc-finger fold. K419 participates in a covalent cross-link: Glycyl lysine isopeptide (Lys-Gly) (interchain with G-Cter in SUMO2). C2H2-type zinc fingers lie at residues 431–453 (YKCSECGKAFHRHTHLNEHRRIH), 459–481 (HKCQECVRSFSRPSHLMRHQAIH), 487–509 (YSCAECKETFSDNNRLVQHQKMH), and 515–537 (YECQECGERFICGSTLKCHESVH). Glycyl lysine isopeptide (Lys-Gly) (interchain with G-Cter in SUMO2) cross-links involve residues K549 and K558. 2 consecutive C2H2-type zinc fingers follow at residues 562–584 (FKCNKCEKTFSCSKYLTQHERIH) and 591–613 (FECDQCGKAFGQSTRLIHHQRIH). A Glycyl lysine isopeptide (Lys-Gly) (interchain with G-Cter in SUMO2) cross-link involves residue K635. C2H2-type zinc fingers lie at residues 646–668 (FKCNECGKTFSHSAHLSKHQLIH), 674–696 (FKCSKCDRVFTQRNYLVQHERTH), 702–724 (LVCNECGKTFRQSSCLSKHQRIH), 730–752 (YVCDYCGKAFGLSAELVRHQRIH), 758–780 (YVCQECGKAFTQSSCLSIHRRVH), 786–808 (YRCGECGKAFAQKANLTQHQRIH), 814–836 (YSCNVCGKAFVLSAHLNQHLRVH), and 842–864 (YQCQRCQKAFRCHSSLSRHQRVH).

Belongs to the krueppel C2H2-type zinc-finger protein family. In terms of assembly, interacts with the SLBP/pre-mRNA complex but not with SLBP alone. Interacts with LSM11 in a U7 snRNP-dependent manner.

Its subcellular location is the nucleus. Involved in histone 3'-end pre-mRNA processing by associating with U7 snRNP and interacting with SLBP/pre-mRNA complex. Increases histone 3'-end pre-mRNA processing but has no effect on U7 snRNP levels, when overexpressed. Required for cell cycle progression from G1 to S phases. The polypeptide is Zinc finger protein 473 (ZNF473) (Homo sapiens (Human)).